The primary structure comprises 74 residues: uncharacterized protein (74 aa).

This is an uncharacterized protein from Enterobacteria phage T4 (Bacteriophage T4).